The sequence spans 507 residues: ATP synthase subunit alpha, chloroplastic (507 aa).

170–177 (GDRQTGKT) lines the ATP pocket.

Belongs to the ATPase alpha/beta chains family. In terms of assembly, F-type ATPases have 2 components, CF(1) - the catalytic core - and CF(0) - the membrane proton channel. CF(1) has five subunits: alpha(3), beta(3), gamma(1), delta(1), epsilon(1). CF(0) has four main subunits: a, b, b' and c.

The protein localises to the plastid. It localises to the chloroplast thylakoid membrane. It catalyses the reaction ATP + H2O + 4 H(+)(in) = ADP + phosphate + 5 H(+)(out). In terms of biological role, produces ATP from ADP in the presence of a proton gradient across the membrane. The alpha chain is a regulatory subunit. The polypeptide is ATP synthase subunit alpha, chloroplastic (Ipomoea purpurea (Common morning glory)).